The chain runs to 520 residues: 2-isopropylmalate synthase (520 aa).

Positions 12 to 274 constitute a Pyruvate carboxyltransferase domain; that stretch reads IRIFDTTLRD…DSAINTPRIV (263 aa). Residues aspartate 21, histidine 209, histidine 211, and asparagine 245 each coordinate Mn(2+). Residues 396–520 are regulatory domain; sequence RLASMTISDV…VVAGKTAAVA (125 aa).

Belongs to the alpha-IPM synthase/homocitrate synthase family. LeuA type 1 subfamily. In terms of assembly, homodimer. Requires Mn(2+) as cofactor.

The protein resides in the cytoplasm. The catalysed reaction is 3-methyl-2-oxobutanoate + acetyl-CoA + H2O = (2S)-2-isopropylmalate + CoA + H(+). It functions in the pathway amino-acid biosynthesis; L-leucine biosynthesis; L-leucine from 3-methyl-2-oxobutanoate: step 1/4. In terms of biological role, catalyzes the condensation of the acetyl group of acetyl-CoA with 3-methyl-2-oxobutanoate (2-ketoisovalerate) to form 3-carboxy-3-hydroxy-4-methylpentanoate (2-isopropylmalate). This chain is 2-isopropylmalate synthase, found in Xanthomonas axonopodis pv. citri (strain 306).